Consider the following 217-residue polypeptide: LexA repressor (217 aa).

The segment at residues 26 to 46 (FEEMKLALDLKSKSGIHRLIK) is a DNA-binding region (H-T-H motif). Residues Ser138 and Lys176 each act as for autocatalytic cleavage activity in the active site.

The protein belongs to the peptidase S24 family. Homodimer.

The enzyme catalyses Hydrolysis of Ala-|-Gly bond in repressor LexA.. Functionally, represses a number of genes involved in the response to DNA damage (SOS response), including recA and lexA. In the presence of single-stranded DNA, RecA interacts with LexA causing an autocatalytic cleavage which disrupts the DNA-binding part of LexA, leading to derepression of the SOS regulon and eventually DNA repair. The protein is LexA repressor of Zymomonas mobilis subsp. mobilis (strain ATCC 31821 / ZM4 / CP4).